Here is a 264-residue protein sequence, read N- to C-terminus: uncharacterized protein (264 aa).

The helical transmembrane segment at Leu-7–Thr-27 threads the bilayer.

Belongs to the staphylococcal tandem lipoprotein family.

It is found in the cell membrane. This is an uncharacterized protein from Staphylococcus aureus (strain MW2).